Here is a 480-residue protein sequence, read N- to C-terminus: NADH-quinone oxidoreductase subunit N (480 aa).

Helical transmembrane passes span 11–31 (LLPELVATGFLLVVLLGGVFA), 38–58 (LVAALAGLGTLASFAAAAGLL), 76–96 (FALYFKLIITATAFFTVIAAA), 105–125 (APEYMTLIIAVALGGMLLVSM), 128–148 (LFGVFLAVELATIPSYAMVAF), 163–183 (LITGVIASSFLLYGIVLIYGV), 195–215 (AFGEGLSPVAIVGLVLMISGL), 240–260 (AAFLSVAPKAAIFAALLRILL), 270–290 (WTALMAVIAIVTMFVGNLLAL), 298–318 (MLAYSSVAHSGYILAAFAALQ), 329–349 (VMIYSAAYAVMNLGAFLTIDL), 368–388 (AAAMAVFMAALVGIPPLSGFF), 407–427 (VAVAALVVNSVLSVPYYFGII), and 453–473 (VYAMALLTALFFLGVGPLAAL).

Belongs to the complex I subunit 2 family. NDH-1 is composed of 14 different subunits. Subunits NuoA, H, J, K, L, M, N constitute the membrane sector of the complex.

The protein resides in the cell membrane. It catalyses the reaction a quinone + NADH + 5 H(+)(in) = a quinol + NAD(+) + 4 H(+)(out). NDH-1 shuttles electrons from NADH, via FMN and iron-sulfur (Fe-S) centers, to quinones in the respiratory chain. The immediate electron acceptor for the enzyme in this species is believed to be a menaquinone. Couples the redox reaction to proton translocation (for every two electrons transferred, four hydrogen ions are translocated across the cytoplasmic membrane), and thus conserves the redox energy in a proton gradient. In Rubrobacter xylanophilus (strain DSM 9941 / JCM 11954 / NBRC 16129 / PRD-1), this protein is NADH-quinone oxidoreductase subunit N.